The primary structure comprises 408 residues: tRNA-specific 2-thiouridylase MnmA (408 aa).

ATP-binding positions include 27–34 (AMSGGVDS) and leucine 53. The Nucleophile role is filled by cysteine 121. An intrachain disulfide couples cysteine 121 to cysteine 222. Residue glycine 145 coordinates ATP. Residues 172 to 174 (RDQ) are interaction with tRNA. Catalysis depends on cysteine 222, which acts as the Cysteine persulfide intermediate.

The protein belongs to the MnmA/TRMU family.

It is found in the cytoplasm. It catalyses the reaction S-sulfanyl-L-cysteinyl-[protein] + uridine(34) in tRNA + AH2 + ATP = 2-thiouridine(34) in tRNA + L-cysteinyl-[protein] + A + AMP + diphosphate + H(+). Its function is as follows. Catalyzes the 2-thiolation of uridine at the wobble position (U34) of tRNA, leading to the formation of s(2)U34. This is tRNA-specific 2-thiouridylase MnmA from Rhizobium johnstonii (strain DSM 114642 / LMG 32736 / 3841) (Rhizobium leguminosarum bv. viciae).